The chain runs to 1095 residues: Collagen, type I, alpha 1a (1095 aa).

Pro residues predominate over residues 1–21; that stretch reads SPAMPVPGPMGPMGPRGPPGS. The tract at residues 1-1011 is disordered; sequence SPAMPVPGPM…QPQEKAPDPY (1011 aa). Over residues 22 to 49 the composition is skewed to low complexity; that stretch reads PGASGPQGFTGPPGEPGEAGSAGAMGPR. Basic and acidic residues predominate over residues 58–72; it reads NGEDGESGKPGRGGE. Residues 127 to 145 show a composition bias toward low complexity; sequence TGAAGAAGARGNDGAAGAA. The segment covering 147–160 has biased composition (pro residues); that stretch reads PPGPTGPAGPPGFP. Positions 161-179 are enriched in gly residues; that stretch reads GGPGAKGDAGAQGGRGPEG. Low complexity-rich tracts occupy residues 180–223, 232–270, and 288–297; these read PAGA…AGAP, SGPQGAAGAPGPKGNTGEVGAPGAKGEAGAKGEAGAPGV, and EPGAAGARGA. Positions 299-311 are enriched in gly residues; that stretch reads GERGGPGGRGFPG. Composition is skewed to low complexity over residues 385-400, 477-489, 498-544, and 577-592; these read VGARGQPGVMGFPGPK, LPGEAGATGPAGA, ERGA…QGMP, and RGLTGPLGLPGPAGAT. The span at 602–611 shows a compositional bias: gly residues; that stretch reads GPVGPGGARG. Low complexity-rich tracts occupy residues 625–661 and 675–697; these read AGFAGPPGADGQPGAKGEAGDNGAKGDAGPPGAAGPT and PKGARGAAGPPGATGFPGAAGRV. A compositionally biased stretch (pro residues) spans 699–712; sequence PPGPSGNPGPPGPA. Positions 804-822 are enriched in low complexity; that stretch reads PGLAGAPGEPGREGSPGNE. The span at 848 to 858 shows a compositional bias: pro residues; the sequence is APGPPGAPGPV. Over residues 872-893 the composition is skewed to low complexity; that stretch reads PAGPAGSAGPAGPRGPAGALGL. Basic and acidic residues predominate over residues 894–908; sequence RGDKGESGEAGERGM. Low complexity predominate over residues 924–960; the sequence is AGSSGEQGPAGAAGPAGPRGPAGSAGSPGKDGMSGLP. The segment covering 976-988 has biased composition (pro residues); sequence AGPPGPPGPPGAP. One can recognise a Fibrillar collagen NC1 domain in the interval 1062–1095; it reads TGTWGKLPLLDLAPMDVGAPDQEFGLEVGPVCFL.

Belongs to the fibrillar collagen family.

Its subcellular location is the secreted. It is found in the extracellular space. It localises to the extracellular matrix. This is Collagen, type I, alpha 1a from Epinephelus caninus (Dogtooth grouper).